Here is a 501-residue protein sequence, read N- to C-terminus: Cystine/glutamate transporter (501 aa).

At 1-43 (MVRKPVVSTISKGGYLQGNVNGRLPSLGNKEPPGQEKVQLKRK) the chain is on the cytoplasmic side. Residue Ser26 is modified to Phosphoserine. The helical transmembrane segment at 44 to 64 (VTLLRGVSIIIGTIIGAGIFI) threads the bilayer. The Extracellular segment spans residues 65 to 74 (SPKGVLQNTG). A helical membrane pass occupies residues 75–95 (SVGMSLTIWTVCGVLSLFGAL). At 96–101 (SYAELG) the chain is on the cytoplasmic side. An intramembrane segment occupies 102–116 (TTIKKSGGHYTYILE). Topologically, residues 117 to 130 (VFGPLPAFVRVWVE) are cytoplasmic. The chain crosses the membrane as a helical span at residues 131-150 (LLIIRPAATAVISLAFGRYI). Arg135 contacts L-glutamate. At 151–163 (LEPFFIQCEIPEL) the chain is on the extracellular side. A helical membrane pass occupies residues 164-179 (AIKLITAVGITVVMVL). At 180-193 (NSMSVSWSARIQIF) the chain is on the cytoplasmic side. Residues 194–210 (LTFCKLTAILIIIVPGV) traverse the membrane as a helical segment. The Extracellular portion of the chain corresponds to 211–234 (MQLIKGQTQNFKDAFSGRDSSITR). Residues 235-255 (LPLAFYYGMYAYAGWFYLNFV) form a helical membrane-spanning segment. Residue Tyr244 coordinates L-glutamate. The Cytoplasmic segment spans residues 256–265 (TEEVENPEKT). Residues 266–286 (IPLAICISMAIVTIGYVLTNV) traverse the membrane as a helical segment. Topologically, residues 287 to 317 (AYFTTINAEELLLSNAVAVTFSERLLGNFSL) are extracellular. Residue Asn314 is glycosylated (N-linked (GlcNAc...) asparagine). Residues 318–338 (AVPIFVALSCFGSMNGGVFAV) traverse the membrane as a helical segment. The Cytoplasmic portion of the chain corresponds to 339-364 (SRLFYVASREGHLPEILSMIHVRKHT). A helical membrane pass occupies residues 365–385 (PLPAVIVLHPLTMIMLFSGDL). The Extracellular segment spans residues 386 to 387 (DS). Residues 388–408 (LLNFLSFARWLFIGLAVAGLI) traverse the membrane as a helical segment. The Cytoplasmic portion of the chain corresponds to 409-422 (YLRYKCPDMHRPFK). A helical membrane pass occupies residues 423 to 443 (VPLFIPALFSFTCLFMVALSL). Over 444-449 (YSDPFS) the chain is Extracellular. A helical membrane pass occupies residues 450–470 (TGIGFVITLTGVPAYYLFIIW). Topologically, residues 471-501 (DKKPRWFRIMSEKITRTLQIILEVVPEEDKL) are cytoplasmic.

Belongs to the amino acid-polyamine-organocation (APC) superfamily. L-type amino acid transporter (LAT) (TC 2.A.3.8) family. As to quaternary structure, disulfide-linked heterodimer with the amino acid transport protein SLC3A2/4F2hc; this interaction mediates cell membrane localization. Ubiquitinated by TRIM26; leading to proteasomal degradation. As to expression, expressed in term placenta and primary term cytotrophoblast. Expressed mainly in the brain, but also in pancreas.

It is found in the cell membrane. The protein resides in the cell projection. It localises to the microvillus membrane. The catalysed reaction is L-cystine(out) + L-glutamate(in) = L-cystine(in) + L-glutamate(out). It carries out the reaction an L-alpha-amino acid(in) + L-kynurenine(out) = an L-alpha-amino acid(out) + L-kynurenine(in). The enzyme catalyses N-acetyl-L-cysteine(out) + L-glutamate(in) = N-acetyl-L-cysteine(in) + L-glutamate(out). With respect to regulation, inhibited by erastin and sulfasalazine. Inhibited by (S)-lactate. Inactivated by p-chloromercuribenzoic acid and p-chloromercuribenzenesulfonic acid. In terms of biological role, heterodimer with SLC3A2, that functions as an antiporter by mediating the exchange of extracellular anionic L-cystine and intracellular L-glutamate across the cellular plasma membrane. Provides L-cystine for the maintenance of the redox balance between extracellular L-cystine and L-cysteine and for the maintenance of the intracellular levels of glutathione that is essential for cells protection from oxidative stress. The transport is sodium-independent, electroneutral with a stoichiometry of 1:1, and is drove by the high intracellular concentration of L-glutamate and the intracellular reduction of L-cystine. In addition, mediates the import of L-kynurenine leading to anti-ferroptotic signaling propagation required to maintain L-cystine and glutathione homeostasis. Moreover, mediates N-acetyl-L-cysteine uptake into the placenta leading to subsequently down-regulation of pathways associated with oxidative stress, inflammation and apoptosis. In vitro can also transport L-aspartate. May participate in astrocyte and meningeal cell proliferation during development and can provide neuroprotection by promoting glutathione synthesis and delivery from non-neuronal cells such as astrocytes and meningeal cells to immature neurons. Controls the production of pheomelanin pigment directly. In Homo sapiens (Human), this protein is Cystine/glutamate transporter.